Here is a 269-residue protein sequence, read N- to C-terminus: MPELPEVEVSRMGISPHMVGQTIKAFVFRTPKLRWDIPQELKLLEGQVIRNIRRRAKYLLIDTDQGTAIVHLGMSGSLRVLDADFPAAKHDHVDLKLTNGKVLRYNDPRRFGAWLWCAPGESHAVLEHMGPEPLTDAFNSEYIADKAQGKRVAVKQFIMDNKVVVGVGNIYANESLFKSRILPTRQAGQVTPQEWVLLVENIKATLKIAINQGGTTLKDFAQADGKPGYFAQELLVYGKAGEPCPECGEPLQELKIGQRNTFFCNECQQ.

Pro2 serves as the catalytic Schiff-base intermediate with DNA. The Proton donor role is filled by Glu3. Lys57 functions as the Proton donor; for beta-elimination activity in the catalytic mechanism. The DNA site is built by His90, Arg109, and Lys150. Residues 235-269 (LVYGKAGEPCPECGEPLQELKIGQRNTFFCNECQQ) form an FPG-type zinc finger. The Proton donor; for delta-elimination activity role is filled by Arg259.

This sequence belongs to the FPG family. Monomer. The cofactor is Zn(2+).

It carries out the reaction Hydrolysis of DNA containing ring-opened 7-methylguanine residues, releasing 2,6-diamino-4-hydroxy-5-(N-methyl)formamidopyrimidine.. The enzyme catalyses 2'-deoxyribonucleotide-(2'-deoxyribose 5'-phosphate)-2'-deoxyribonucleotide-DNA = a 3'-end 2'-deoxyribonucleotide-(2,3-dehydro-2,3-deoxyribose 5'-phosphate)-DNA + a 5'-end 5'-phospho-2'-deoxyribonucleoside-DNA + H(+). Its function is as follows. Involved in base excision repair of DNA damaged by oxidation or by mutagenic agents. Acts as a DNA glycosylase that recognizes and removes damaged bases. Has a preference for oxidized purines, such as 7,8-dihydro-8-oxoguanine (8-oxoG). Has AP (apurinic/apyrimidinic) lyase activity and introduces nicks in the DNA strand. Cleaves the DNA backbone by beta-delta elimination to generate a single-strand break at the site of the removed base with both 3'- and 5'-phosphates. In Vibrio parahaemolyticus serotype O3:K6 (strain RIMD 2210633), this protein is Formamidopyrimidine-DNA glycosylase.